A 222-amino-acid chain; its full sequence is Protein-L-isoaspartate O-methyltransferase (222 aa).

Ser-67 is a catalytic residue.

Belongs to the methyltransferase superfamily. L-isoaspartyl/D-aspartyl protein methyltransferase family.

The protein resides in the cytoplasm. It catalyses the reaction [protein]-L-isoaspartate + S-adenosyl-L-methionine = [protein]-L-isoaspartate alpha-methyl ester + S-adenosyl-L-homocysteine. Its function is as follows. Catalyzes the methyl esterification of L-isoaspartyl residues in peptides and proteins that result from spontaneous decomposition of normal L-aspartyl and L-asparaginyl residues. It plays a role in the repair and/or degradation of damaged proteins. The sequence is that of Protein-L-isoaspartate O-methyltransferase from Parvibaculum lavamentivorans (strain DS-1 / DSM 13023 / NCIMB 13966).